The following is a 421-amino-acid chain: Histidine--tRNA ligase (421 aa).

This sequence belongs to the class-II aminoacyl-tRNA synthetase family. In terms of assembly, homodimer.

It is found in the cytoplasm. The enzyme catalyses tRNA(His) + L-histidine + ATP = L-histidyl-tRNA(His) + AMP + diphosphate + H(+). In Francisella tularensis subsp. holarctica (strain FTNF002-00 / FTA), this protein is Histidine--tRNA ligase.